Consider the following 120-residue polypeptide: Ragulator complex protein LAMTOR4 homolog (120 aa).

Residues 93–120 (QNGVTTTTSSSSSNSVYNDASDSGAVLA) form a disordered region. Residues 97–107 (TTTTSSSSSNS) show a composition bias toward low complexity.

The protein belongs to the LAMTOR4 family. In terms of assembly, part of the Ragulator complex composed of Lamtor3, Lamtor2, CG14184, CG14812, and Lamtor4.

Its subcellular location is the lysosome. Functionally, regulator of the TOR pathway, a signaling cascade that promotes cell growth in response to growth factors, energy levels, and amino acids. As part of the Ragulator complex, may activate the TOR signaling cascade in response to amino acids. This Drosophila melanogaster (Fruit fly) protein is Ragulator complex protein LAMTOR4 homolog.